The sequence spans 186 residues: Ribosome-recycling factor (186 aa).

It belongs to the RRF family.

It is found in the cytoplasm. Its function is as follows. Responsible for the release of ribosomes from messenger RNA at the termination of protein biosynthesis. May increase the efficiency of translation by recycling ribosomes from one round of translation to another. This Cupriavidus pinatubonensis (strain JMP 134 / LMG 1197) (Cupriavidus necator (strain JMP 134)) protein is Ribosome-recycling factor.